We begin with the raw amino-acid sequence, 662 residues long: Protein Aster-C (662 aa).

Positions 1-34 (MEGAPTVRQVMNEGDSSLATELQEDVEENPSPTV) are disordered. A GRAM domain is found at 69–136 (EEYRRQFTHL…KNITFMTKEK (68 aa)). Disordered regions lie at residues 212-237 (SIED…EKLS) and 250-284 (VSET…LPTL). Residues 265-276 (LGKEESQNEKQT) are compositionally biased toward basic and acidic residues. A VASt domain is found at 326 to 497 (HGRLFINRIF…DLLIEESILN (172 aa)). A helical membrane pass occupies residues 557-577 (LIVVMSIFVLLLVLLNVTLFL).

It localises to the endoplasmic reticulum membrane. The protein localises to the cell membrane. Cholesterol transporter that mediates non-vesicular transport of cholesterol from the plasma membrane (PM) to the endoplasmic reticulum (ER). Contains unique domains for binding cholesterol and the PM, thereby serving as a molecular bridge for the transfer of cholesterol from the PM to the ER. Plays a crucial role in cholesterol homeostasis and has the unique ability to localize to the PM based on the level of membrane cholesterol. In lipid-poor conditions localizes to the ER membrane and in response to excess cholesterol in the PM is recruited to the endoplasmic reticulum-plasma membrane contact sites (EPCS) which is mediated by the GRAM domain. At the EPCS, the sterol-binding VASt/ASTER domain binds to the cholesterol in the PM and facilitates its transfer from the PM to ER. This is Protein Aster-C (GRAMD1C) from Pongo abelii (Sumatran orangutan).